The primary structure comprises 58 residues: Cecropin-A (58 aa).

Residues 1–23 (MNFSKIFIFVVLAVLLLCSQTEA) form the signal peptide. Leu-57 carries the post-translational modification Leucine amide.

The protein belongs to the cecropin family. Relatively abundant in head, thorax and to a lesser extent in abdominal carcass and anterior midgut.

Its subcellular location is the secreted. In terms of biological role, antibacterial activity against several Gram-positive and Gram-negative bacteria. Antifungal activity against A.fumigatus, B.cinerea, F.culmorum, F.oxysporum, N.crassa, C.albicans, C.neoformans and S.cerevisiae. The sequence is that of Cecropin-A (CecA) from Anopheles gambiae (African malaria mosquito).